We begin with the raw amino-acid sequence, 289 residues long: MMVVKKTVRSPGSATVINAIATGRGSAFGIGLRVEAEAELIDSGVECISREGADTSLMELCTRMVIEHYGVDAGVRVVTSSDLPVASGLSSSSAASNATVMAVSSLLSDEFGLQPMEDFEMLNMAVDASLQAGVSVTGAYDDASASFYGGLTVTDNMERRIILREPMENQKVLIYMPDRKSLTAQSDVPRMKLLAPWVDMAFREVLDGRVHSALTLNGILYCASLGFDPGIALDALEAGALAAGLSGTGPSFVALTHEDSEADIIDAWENLEGDVLVTSVDNEGTRVLE.

84-94 (PVASGLSSSSA) lines the ATP pocket.

This sequence belongs to the GHMP kinase family. Archaeal shikimate kinase subfamily.

It is found in the cytoplasm. The catalysed reaction is shikimate + ATP = 3-phosphoshikimate + ADP + H(+). It functions in the pathway metabolic intermediate biosynthesis; chorismate biosynthesis; chorismate from D-erythrose 4-phosphate and phosphoenolpyruvate: step 5/7. This chain is Shikimate kinase (aroK), found in Methanothermobacter thermautotrophicus (strain ATCC 29096 / DSM 1053 / JCM 10044 / NBRC 100330 / Delta H) (Methanobacterium thermoautotrophicum).